A 450-amino-acid polypeptide reads, in one-letter code: MKTVTEFQNKNILVLGIAKSGYAAATLLQKLGANVIVNDGKPLAENVLAAELQAKGMDVVCGGHPLELLERNISLVVKNPGIPYSNPILVAAKEKQIPIVTEVELAYRISEAPFVGITGSNGKTTTTMLTFEMLKEGQKHPVIAGNIGTVACEVAQDAKENEVVVTELSSFQLMGVELFQPKIAAFLNLFEAHLDYHGTKKEYGLAKANIFKNQTENDYSVINADDADVMALSAYSKGQKVLFSTTKEIEDGACIKDNALYFKAEKVVEVDDIVLPGQHNLENILAAMSIAKLLGVSNEAITAVLKRFTGVKHRLEYVTTINNRKFYNDSKATNMLATEKALSAFTQPTVLLAGGLDRGNEFDDLIPYFKNVKAIVTFGQTAPKLVRAAEKAGLDTIESVDTLDEAVVKAYAHSTDGDVILLSPACASWDQFKTFEERGDIFIQAVHKLI.

119-125 (GSNGKTT) serves as a coordination point for ATP.

Belongs to the MurCDEF family.

It is found in the cytoplasm. The catalysed reaction is UDP-N-acetyl-alpha-D-muramoyl-L-alanine + D-glutamate + ATP = UDP-N-acetyl-alpha-D-muramoyl-L-alanyl-D-glutamate + ADP + phosphate + H(+). It participates in cell wall biogenesis; peptidoglycan biosynthesis. Cell wall formation. Catalyzes the addition of glutamate to the nucleotide precursor UDP-N-acetylmuramoyl-L-alanine (UMA). The sequence is that of UDP-N-acetylmuramoylalanine--D-glutamate ligase from Bacillus anthracis (strain A0248).